Consider the following 568-residue polypeptide: Mannitol 2-dehydrogenase (568 aa).

Residue 109–120 (IVHVGVGGFHRA) coordinates NAD(+).

It belongs to the mannitol dehydrogenase family. In terms of assembly, monomer.

It carries out the reaction D-mannitol + NAD(+) = D-fructose + NADH + H(+). In terms of biological role, catalyzes the NAD(H)-dependent interconversion of D-fructose and D-mannitol in the mannitol metabolic pathway. This Phaeosphaeria nodorum (strain SN15 / ATCC MYA-4574 / FGSC 10173) (Glume blotch fungus) protein is Mannitol 2-dehydrogenase.